Consider the following 38-residue polypeptide: Photosystem II reaction center protein L (38 aa).

The chain crosses the membrane as a helical span at residues 17–37 (SLYWGLLLIFVLAVSFSNYFF).

It belongs to the PsbL family. As to quaternary structure, PSII is composed of 1 copy each of membrane proteins PsbA, PsbB, PsbC, PsbD, PsbE, PsbF, PsbH, PsbI, PsbJ, PsbK, PsbL, PsbM, PsbT, PsbX, PsbY, PsbZ, Psb30/Ycf12, at least 3 peripheral proteins of the oxygen-evolving complex and a large number of cofactors. It forms dimeric complexes.

It is found in the plastid membrane. In terms of biological role, one of the components of the core complex of photosystem II (PSII). PSII is a light-driven water:plastoquinone oxidoreductase that uses light energy to abstract electrons from H(2)O, generating O(2) and a proton gradient subsequently used for ATP formation. It consists of a core antenna complex that captures photons, and an electron transfer chain that converts photonic excitation into a charge separation. This subunit is found at the monomer-monomer interface and is required for correct PSII assembly and/or dimerization. The protein is Photosystem II reaction center protein L of Aneura mirabilis (Parasitic liverwort).